We begin with the raw amino-acid sequence, 238 residues long: Urease subunit alpha (238 aa).

Residues 1–102 are urease gamma; that stretch reads MKLTPKELDK…LVTVHTPIES (102 aa). Residues 103-238 form a urease beta region; it reads KGKLVPGELF…DDNYVKTIKE (136 aa).

In the N-terminal section; belongs to the urease gamma subunit family. It in the C-terminal section; belongs to the urease beta subunit family. Heterohexamer of 3 UreA (alpha) and 3 UreB (beta) subunits.

It is found in the cytoplasm. The catalysed reaction is urea + 2 H2O + H(+) = hydrogencarbonate + 2 NH4(+). It participates in nitrogen metabolism; urea degradation; CO(2) and NH(3) from urea (urease route): step 1/1. This Helicobacter acinonychis (strain Sheeba) protein is Urease subunit alpha.